The sequence spans 205 residues: MEPNKSILQIMKSNSDKVKIILGNIITMLGNRIYIDNNGDSKPLLDPTNAFKNMEERGDNVFIIKADNGDLYAVKVIFQKITAISKQSVISEFLDEYETYKKIIVTKDYTGKIDTFILRNSGQIFKEHEFLADLLSNEFQPRFQLLSPSEMESVKTEYNANPYTLKKIVRSDPIVRYFALKKNDIIRIIRPSATSGQGIDYRVVV.

The protein belongs to the archaeal Rpo5/eukaryotic RPB5 RNA polymerase subunit family.

Its subcellular location is the virion. The enzyme catalyses RNA(n) + a ribonucleoside 5'-triphosphate = RNA(n+1) + diphosphate. In terms of biological role, DNA-dependent RNA polymerase catalyzes the transcription of DNA into RNA using the four ribonucleoside triphosphates as substrates. The protein is DNA-directed RNA polymerase subunit 5 of Acanthamoeba polyphaga (Amoeba).